We begin with the raw amino-acid sequence, 507 residues long: Maturase K (507 aa).

It belongs to the intron maturase 2 family. MatK subfamily.

The protein resides in the plastid. The protein localises to the chloroplast. In terms of biological role, usually encoded in the trnK tRNA gene intron. Probably assists in splicing its own and other chloroplast group II introns. In Liriodendron chinense (Chinese tulip tree), this protein is Maturase K.